The chain runs to 83 residues: Large ribosomal subunit protein eL43 (83 aa).

Zn(2+) contacts are provided by cysteine 38, cysteine 41, cysteine 56, and cysteine 59. The C4-type zinc finger occupies 38 to 59 (CKKCGKKAVKRSGTGIWECRHC).

This sequence belongs to the eukaryotic ribosomal protein eL43 family. Putative zinc-binding subfamily. As to quaternary structure, part of the 50S ribosomal subunit. The cofactor is Zn(2+).

In terms of biological role, binds to the 23S rRNA. The chain is Large ribosomal subunit protein eL43 from Archaeoglobus fulgidus (strain ATCC 49558 / DSM 4304 / JCM 9628 / NBRC 100126 / VC-16).